The sequence spans 252 residues: MTLSAAVDNGQSGYPWLVFLHGFSGDRDEWREVGDAFPAWPRLYLDLPGHGGSADIAVQDFAGVNTLLLATLNSYNILNYWLIGYSLGGRVAMNFACQPRAGLRGLIVEGGHPGLQDAEARQARRSNDRAWAERFRRDPLAQVFADWYQQPVFASLDAAQRESLVALRSRNNGATLAAMLQATSLAGQADLRAPLQARDFPFHYLCGERDAKFRAIAQALAADTHIIHHAGHNAHRDNPAAVIACLAQILAS.

The protein belongs to the AB hydrolase superfamily. MenH family. As to quaternary structure, monomer.

It catalyses the reaction 5-enolpyruvoyl-6-hydroxy-2-succinyl-cyclohex-3-ene-1-carboxylate = (1R,6R)-6-hydroxy-2-succinyl-cyclohexa-2,4-diene-1-carboxylate + pyruvate. It functions in the pathway quinol/quinone metabolism; 1,4-dihydroxy-2-naphthoate biosynthesis; 1,4-dihydroxy-2-naphthoate from chorismate: step 3/7. It participates in quinol/quinone metabolism; menaquinone biosynthesis. Functionally, catalyzes a proton abstraction reaction that results in 2,5-elimination of pyruvate from 2-succinyl-5-enolpyruvyl-6-hydroxy-3-cyclohexene-1-carboxylate (SEPHCHC) and the formation of 2-succinyl-6-hydroxy-2,4-cyclohexadiene-1-carboxylate (SHCHC). The sequence is that of 2-succinyl-6-hydroxy-2,4-cyclohexadiene-1-carboxylate synthase from Klebsiella pneumoniae (strain 342).